We begin with the raw amino-acid sequence, 934 residues long: Serine/threonine-protein kinase PknD (934 aa).

The Protein kinase domain maps to 4 to 296; that stretch reads YELIRLIGKG…ELRQALQPYL (293 aa). ATP is bound by residues 10-18 and lysine 33; that span reads IGKGGMGEV. Aspartate 138 functions as the Proton acceptor in the catalytic mechanism.

This sequence belongs to the protein kinase superfamily. Ser/Thr protein kinase family. Post-translationally, autophosphorylated on serine and threonine residues.

It catalyses the reaction L-seryl-[protein] + ATP = O-phospho-L-seryl-[protein] + ADP + H(+). The catalysed reaction is L-threonyl-[protein] + ATP = O-phospho-L-threonyl-[protein] + ADP + H(+). Its function is as follows. Together with the serine/threonine kinase Pkn1, may play a role in the specific interactions with host proteins during intracellular growth. This Chlamydia trachomatis serovar A (strain ATCC VR-571B / DSM 19440 / HAR-13) protein is Serine/threonine-protein kinase PknD.